The primary structure comprises 326 residues: Adenosine receptor A1 (326 aa).

At 1-10 (MPPYISAFQA) the chain is on the extracellular side. Residues 11–33 (AYIGIEVLIALVSVPGNVLVIWA) form a helical membrane-spanning segment. Over 34-46 (VKVNQALRDATFC) the chain is Cytoplasmic. The chain crosses the membrane as a helical span at residues 47–69 (FIVSLAVADVAVGALVIPLAILI). The Extracellular portion of the chain corresponds to 70–80 (NIGPQTYFHTC). Cys80 and Cys169 are oxidised to a cystine. A helical membrane pass occupies residues 81–102 (LMVACPVLILTQSSILALLAIA). Topologically, residues 103–123 (VDRYLRVKIPLRYKTVVTQRR) are cytoplasmic. A helical transmembrane segment spans residues 124-146 (AAVAIAGCWILSLVVGLTPMFGW). Topologically, residues 147 to 176 (NNLSEVEQAWIANGSVGEPVIKCEFEKVIS) are extracellular. Residues Asn148 and Asn159 are each glycosylated (N-linked (GlcNAc...) asparagine). A helical transmembrane segment spans residues 177-201 (MEYMVYFNFFVWVLPPLLLMVLIYL). The Cytoplasmic portion of the chain corresponds to 202-235 (EVFYLIRKQLNKKVSASSGDPQKYYGKELKIAKS). A helical transmembrane segment spans residues 236 to 259 (LALILFLFALSWLPLHILNCITLF). Residues 260–267 (CPTCQKPS) are Extracellular-facing. The chain crosses the membrane as a helical span at residues 268-292 (ILIYIAIFLTHGNSAMNPIVYAFRI). Topologically, residues 293–326 (HKFRVTFLKIWNDHFRCQPKPPIEEDIPEEKADD) are cytoplasmic. Cys309 is lipidated: S-palmitoyl cysteine.

This sequence belongs to the G-protein coupled receptor 1 family.

It is found in the cell membrane. Functionally, receptor for adenosine. The activity of this receptor is mediated by G proteins which inhibit adenylyl cyclase. The polypeptide is Adenosine receptor A1 (Adora1) (Mus musculus (Mouse)).